The primary structure comprises 421 residues: MESPNMRKRLIEMESSLEVKKTATTVKQEPLETSSPLLASMISTAPNPPPTSPHALNYLTLLAAFRQFLHGYIQAGGDENLANTLGNYVAALPMPPNSLNPIGPLNAPKSPFKQQQKFHSIIKAVKREPVSEPAQNAGSGDSSVTLSSALGEDAVPQNRGSCTSMKPVPRFVMLPVVAAQSASPSASGPTSEIQQLREAAFGRYKNVLCVICNEWICSRNRKNHIEAHLNYRPYKCSACSYARRREIFVDQHIRTQHKGVEGVVMLSDVDLHVAMEVDRLAEECVTRTRKIIDTMQEKKDGDFGENKDFDEKALQMMLAEEAENKVVVIESVSQVRPKVANYHRRQRTKVLKKIYDTDVAKQTELKIVKDEEGGVPTMSIKLEEGFEINLEDLMKMVGAGSSITDSNEPGPSEIKKELAEV.

2 consecutive C2H2-type zinc fingers follow at residues 207 to 228 (VLCV…IEAH) and 234 to 257 (YKCS…RTQH). The disordered stretch occupies residues 400-421 (GSSITDSNEPGPSEIKKELAEV).

Its subcellular location is the nucleus. The protein is Putative zinc finger protein R05D3.3 of Caenorhabditis elegans.